We begin with the raw amino-acid sequence, 381 residues long: Probable G-protein coupled receptor 34 (381 aa).

At 1-61 (MRSHTITMTT…LLSTVLTTSY (61 aa)) the chain is on the extracellular side. 3 N-linked (GlcNAc...) asparagine glycosylation sites follow: asparagine 28, asparagine 36, and asparagine 42. Residues 62–82 (SVIFIVGLVGNIIALYVFLGI) traverse the membrane as a helical segment. At 83-88 (HRKRNS) the chain is on the cytoplasmic side. A helical transmembrane segment spans residues 89–109 (IQIYLLNVAIADLLLIFCLPF). Topologically, residues 110–128 (RIMYHINQNKWTLGVILCK) are extracellular. An intrachain disulfide couples cysteine 127 to cysteine 204. A helical membrane pass occupies residues 129–149 (VVGTLFYMNMYISIILLGFIS). Topologically, residues 150–171 (LDRYIKINRSIQQRKAITTKQS) are cytoplasmic. Residues 172–192 (IYVCCIVWMLALGGFLTMIIL) traverse the membrane as a helical segment. Topologically, residues 193–216 (TLKKGGHNSTMCFHYRDKHNAKGE) are extracellular. Residue asparagine 200 is glycosylated (N-linked (GlcNAc...) asparagine). A helical transmembrane segment spans residues 217–237 (AIFNFILVVMFWLIFLLIILS). Residues 238 to 269 (YIKIGKNLLRISKRRSKFPNSGKYATTARNSF) lie on the Cytoplasmic side of the membrane. The chain crosses the membrane as a helical span at residues 270 to 290 (IVLIIFTICFVPYHAFRFIYI). The Extracellular segment spans residues 291–310 (SSQLNVSSCYWKEIVHKTNE). An N-linked (GlcNAc...) asparagine glycan is attached at asparagine 295. A helical transmembrane segment spans residues 311–331 (IMLVLSSFNSCLDPVMYFLMS). Topologically, residues 332–381 (SNIRKIMCQLLFRRFQGEPSRSESTSEFKPGYSLHDTSVAVKIQSSSKST) are cytoplasmic.

It belongs to the G-protein coupled receptor 1 family.

Its subcellular location is the cell membrane. Its function is as follows. G-protein-coupled receptor of lysophosphatidylserine (LysoPS) that plays different roles in immune response. Acts a damage-sensing receptor that triggers tissue repair upon recognition of dying neutrophils. Mechanistically, apoptotic neutrophils release lysophosphatydilserine that are recognized by type 3 innate lymphoid cells (ILC3s) via GPR34, which activates downstream PI3K-AKT and RAS-ERK signaling pathways leading to STAT3 activation and IL-22 production. Plays an important role in microglial function, controlling morphology and phagocytosis. The sequence is that of Probable G-protein coupled receptor 34 (GPR34) from Gorilla gorilla gorilla (Western lowland gorilla).